The sequence spans 143 residues: MRSSRQKASISKLDLDQFVFTPPGPMGWQAHDSISAEKEEEEKHLDVGSIRELPHINAPKEYQKETKEKETDRKIVDDEEETKFETTLEPEEERDSKRSAPPYEEEDEDEEPDLAEEAKVEIIILPSESKPAPWFSQTVKRKA.

Residues 1–143 (MRSSRQKASI…WFSQTVKRKA (143 aa)) are disordered. 2 stretches are compositionally biased toward basic and acidic residues: residues 34 to 46 (ISAE…KHLD) and 61 to 76 (EYQK…RKIV). Acidic residues-rich tracts occupy residues 77 to 93 (DDEE…PEEE) and 103 to 115 (YEEE…PDLA).

This is an uncharacterized protein from Bacillus subtilis (strain 168).